The chain runs to 331 residues: Ribosomal RNA small subunit methyltransferase H (331 aa).

Residues 38–40 (GGY), Asp-56, Phe-83, Asp-100, and Gln-107 contribute to the S-adenosyl-L-methionine site. Positions 289-331 (AELAENPRARSARLRVGVRTDAPAGKVDPQALGTPLIPKKGRR) are disordered.

This sequence belongs to the methyltransferase superfamily. RsmH family.

It is found in the cytoplasm. The catalysed reaction is cytidine(1402) in 16S rRNA + S-adenosyl-L-methionine = N(4)-methylcytidine(1402) in 16S rRNA + S-adenosyl-L-homocysteine + H(+). Functionally, specifically methylates the N4 position of cytidine in position 1402 (C1402) of 16S rRNA. In Cereibacter sphaeroides (strain ATCC 17029 / ATH 2.4.9) (Rhodobacter sphaeroides), this protein is Ribosomal RNA small subunit methyltransferase H.